Here is a 157-residue protein sequence, read N- to C-terminus: Transcriptional repressor NrdR (157 aa).

The tract at residues 1-21 (MKCPHCGNNGSRVVDSRPTDE) is disordered. The segment at 3–34 (CPHCGNNGSRVVDSRPTDEGRVIRRRRECEKC) is a zinc-finger region. In terms of domain architecture, ATP-cone spans 49-139 (LLVIKKNGSR…VYRQFKDMHV (91 aa)).

This sequence belongs to the NrdR family. Zn(2+) is required as a cofactor.

Its function is as follows. Negatively regulates transcription of bacterial ribonucleotide reductase nrd genes and operons by binding to NrdR-boxes. The chain is Transcriptional repressor NrdR from Pediococcus pentosaceus (strain ATCC 25745 / CCUG 21536 / LMG 10740 / 183-1w).